The primary structure comprises 54 residues: ATP synthase protein 8 (54 aa).

The helical transmembrane segment at 9–25 threads the bilayer; sequence WVFLFFLVWLVLGFLGL.

This sequence belongs to the ATPase protein 8 family. As to quaternary structure, F-type ATPases have 2 components, CF(1) - the catalytic core - and CF(0) - the membrane proton channel.

It localises to the mitochondrion membrane. In terms of biological role, mitochondrial membrane ATP synthase (F(1)F(0) ATP synthase or Complex V) produces ATP from ADP in the presence of a proton gradient across the membrane which is generated by electron transport complexes of the respiratory chain. F-type ATPases consist of two structural domains, F(1) - containing the extramembraneous catalytic core and F(0) - containing the membrane proton channel, linked together by a central stalk and a peripheral stalk. During catalysis, ATP synthesis in the catalytic domain of F(1) is coupled via a rotary mechanism of the central stalk subunits to proton translocation. Part of the complex F(0) domain. Minor subunit located with subunit a in the membrane. The protein is ATP synthase protein 8 (MTATP8) of Branchiostoma floridae (Florida lancelet).